A 158-amino-acid polypeptide reads, in one-letter code: tRNA (cytidine(34)-2'-O)-methyltransferase (158 aa).

Residues Gly103, Ile123, and Ser131 each coordinate S-adenosyl-L-methionine.

This sequence belongs to the class IV-like SAM-binding methyltransferase superfamily. RNA methyltransferase TrmH family. TrmL subfamily. As to quaternary structure, homodimer.

The protein resides in the cytoplasm. The catalysed reaction is cytidine(34) in tRNA + S-adenosyl-L-methionine = 2'-O-methylcytidine(34) in tRNA + S-adenosyl-L-homocysteine + H(+). It catalyses the reaction 5-carboxymethylaminomethyluridine(34) in tRNA(Leu) + S-adenosyl-L-methionine = 5-carboxymethylaminomethyl-2'-O-methyluridine(34) in tRNA(Leu) + S-adenosyl-L-homocysteine + H(+). Methylates the ribose at the nucleotide 34 wobble position in the two leucyl isoacceptors tRNA(Leu)(CmAA) and tRNA(Leu)(cmnm5UmAA). Catalyzes the methyl transfer from S-adenosyl-L-methionine to the 2'-OH of the wobble nucleotide. The polypeptide is tRNA (cytidine(34)-2'-O)-methyltransferase (Ancylobacter novellus (strain ATCC 8093 / DSM 506 / JCM 20403 / CCM 1077 / IAM 12100 / NBRC 12443 / NCIMB 10456) (Starkeya novella)).